A 96-amino-acid chain; its full sequence is Large ribosomal subunit protein bL21 (96 aa).

The protein belongs to the bacterial ribosomal protein bL21 family. As to quaternary structure, part of the 50S ribosomal subunit. Contacts protein L20.

Functionally, this protein binds to 23S rRNA in the presence of protein L20. The chain is Large ribosomal subunit protein bL21 from Chlorobium chlorochromatii (strain CaD3).